Reading from the N-terminus, the 550-residue chain is U-box domain-containing protein 40 (550 aa).

Over residues 19–29 (KSDNLSRRESL) the composition is skewed to basic and acidic residues. Positions 19-55 (KSDNLSRRESLAGKSKWRTSLSRSSSSSSSNNNSPTK) are disordered. Positions 38 to 52 (SLSRSSSSSSSNNNS) are enriched in low complexity. The U-box domain maps to 57–127 (EIPAEFLCPI…HSWCERRCFP (71 aa)). 5 ARM repeats span residues 260-299 (ESSRISLCTTRVISALKSLIVSRYATVQVNVTAVLVNLSL), 301-340 (KSNKVKIVRSGIVPPLIDVLKCGSVEAQEHSAGVIFSLAL), 342-381 (DENKTAIGVLGGLEPLLHLIRVGTELTRHDSALALYHLSL), 383-420 (QSNRGKLVKLGAVQMLLGMVSLGQMIGRVLLILCNMAS), and 422-464 (PVSR…GLSH).

It catalyses the reaction S-ubiquitinyl-[E2 ubiquitin-conjugating enzyme]-L-cysteine + [acceptor protein]-L-lysine = [E2 ubiquitin-conjugating enzyme]-L-cysteine + N(6)-ubiquitinyl-[acceptor protein]-L-lysine.. Its pathway is protein modification; protein ubiquitination. Functionally, functions as an E3 ubiquitin ligase. The protein is U-box domain-containing protein 40 (PUB40) of Arabidopsis thaliana (Mouse-ear cress).